The sequence spans 338 residues: Methionine synthase (338 aa).

Residues His-211, Cys-213, and Cys-294 each coordinate Zn(2+).

Belongs to the archaeal MetE family. Zn(2+) serves as cofactor.

Its pathway is amino-acid biosynthesis; L-methionine biosynthesis via de novo pathway. In terms of biological role, catalyzes the transfer of a methyl group to L-homocysteine resulting in methionine formation. The physiological methyl donor is unknown. The protein is Methionine synthase of Sulfurisphaera tokodaii (strain DSM 16993 / JCM 10545 / NBRC 100140 / 7) (Sulfolobus tokodaii).